A 296-amino-acid polypeptide reads, in one-letter code: Polyamine aminopropyltransferase (296 aa).

The PABS domain occupies 16–251; it reads HLWYFEYYTG…GMWSYTFASK (236 aa). Residue Gln46 coordinates S-methyl-5'-thioadenosine. Residues His77 and Asp101 each contribute to the spermidine site. S-methyl-5'-thioadenosine-binding positions include Glu121 and 152–153; that span reads NG. The active-site Proton acceptor is the Asp170. Position 170–173 (170–173) interacts with spermidine; sequence DSTD.

It belongs to the spermidine/spermine synthase family. In terms of assembly, homodimer or homotetramer.

The protein localises to the cytoplasm. The catalysed reaction is S-adenosyl 3-(methylsulfanyl)propylamine + putrescine = S-methyl-5'-thioadenosine + spermidine + H(+). Its pathway is amine and polyamine biosynthesis; spermidine biosynthesis; spermidine from putrescine: step 1/1. Catalyzes the irreversible transfer of a propylamine group from the amino donor S-adenosylmethioninamine (decarboxy-AdoMet) to putrescine (1,4-diaminobutane) to yield spermidine. In Thermotoga petrophila (strain ATCC BAA-488 / DSM 13995 / JCM 10881 / RKU-1), this protein is Polyamine aminopropyltransferase.